A 217-amino-acid chain; its full sequence is Protein-L-isoaspartate O-methyltransferase (217 aa).

Residue serine 59 is part of the active site.

The protein belongs to the methyltransferase superfamily. L-isoaspartyl/D-aspartyl protein methyltransferase family.

Its subcellular location is the cytoplasm. The catalysed reaction is [protein]-L-isoaspartate + S-adenosyl-L-methionine = [protein]-L-isoaspartate alpha-methyl ester + S-adenosyl-L-homocysteine. Functionally, catalyzes the methyl esterification of L-isoaspartyl residues in peptides and proteins that result from spontaneous decomposition of normal L-aspartyl and L-asparaginyl residues. It plays a role in the repair and/or degradation of damaged proteins. The chain is Protein-L-isoaspartate O-methyltransferase (pcm) from Methanothermobacter thermautotrophicus (strain ATCC 29096 / DSM 1053 / JCM 10044 / NBRC 100330 / Delta H) (Methanobacterium thermoautotrophicum).